Reading from the N-terminus, the 398-residue chain is FK506-binding protein 4 (398 aa).

3 disordered regions span residues 66–120 (EVDE…DEYE), 164–232 (VKHP…QLAK), and 245–288 (DLIA…KKNK). A compositionally biased stretch (acidic residues) spans 170-228 (EPLEDLYSDEDSEEYSDDELDQEIEEDDELDHDEASSEESDEDQEFYDAISEGDEDIDE). Over residues 264–287 (PETKKSKKTKDEKNTKATENEKKN) the composition is skewed to basic and acidic residues. The PPIase FKBP-type domain maps to 312 to 398 (GSKVGMRYIG…TFDVKLVSLK (87 aa)).

It belongs to the FKBP-type PPIase family. FKBP3/4 subfamily. As to quaternary structure, binds to histones H3 and H4.

It localises to the nucleus. The catalysed reaction is [protein]-peptidylproline (omega=180) = [protein]-peptidylproline (omega=0). With respect to regulation, inhibited by both FK506 and rapamycin. In terms of biological role, PPIase that acts as a histone chaperone. Histone proline isomerase that increases the rate of cis-trans isomerization at prolines on the histone H3 N-terminal tail. Proline isomerization influences H3 methylation thereby regulating gene expression. The polypeptide is FK506-binding protein 4 (FPR4) (Candida glabrata (strain ATCC 2001 / BCRC 20586 / JCM 3761 / NBRC 0622 / NRRL Y-65 / CBS 138) (Yeast)).